We begin with the raw amino-acid sequence, 205 residues long: Molybdenum cofactor guanylyltransferase (205 aa).

GTP-binding positions include leucine 14 to glycine 16, lysine 27, aspartate 77, and aspartate 107. Residue aspartate 107 participates in Mg(2+) binding.

Belongs to the MobA family. Monomer. It depends on Mg(2+) as a cofactor.

Its subcellular location is the cytoplasm. The catalysed reaction is Mo-molybdopterin + GTP + H(+) = Mo-molybdopterin guanine dinucleotide + diphosphate. In terms of biological role, transfers a GMP moiety from GTP to Mo-molybdopterin (Mo-MPT) cofactor (Moco or molybdenum cofactor) to form Mo-molybdopterin guanine dinucleotide (Mo-MGD) cofactor. The chain is Molybdenum cofactor guanylyltransferase from Burkholderia orbicola (strain MC0-3).